The primary structure comprises 202 residues: dTTP/UTP pyrophosphatase (202 aa).

The active-site Proton acceptor is the aspartate 71.

It belongs to the Maf family. YhdE subfamily. A divalent metal cation serves as cofactor.

It localises to the cytoplasm. The enzyme catalyses dTTP + H2O = dTMP + diphosphate + H(+). It catalyses the reaction UTP + H2O = UMP + diphosphate + H(+). In terms of biological role, nucleoside triphosphate pyrophosphatase that hydrolyzes dTTP and UTP. May have a dual role in cell division arrest and in preventing the incorporation of modified nucleotides into cellular nucleic acids. This is dTTP/UTP pyrophosphatase from Zymomonas mobilis subsp. mobilis (strain ATCC 31821 / ZM4 / CP4).